The sequence spans 755 residues: SWI/SNF-related matrix-associated actin-dependent regulator of chromatin subfamily A-like protein 1 (755 aa).

Residues 7 to 27 adopt a coiled-coil conformation; the sequence is SEIAEKKRIALAKLQAKKSQL. 2 disordered regions span residues 26 to 91 and 104 to 134; these read QLLA…NKSS and SNRE…SLSS. Residues 32–63 are compositionally biased toward polar residues; it reads PATNGKSTTSATGATQHANNGKSNPNQPQAKS. Residue Ser63 is modified to Phosphoserine. Positions 139–217 constitute an HARP domain; that stretch reads PVAVLLGNSI…KPYVHMNGIP (79 aa). The region spanning 256-412 is the Helicase ATP-binding domain; the sequence is CFAIAQKGRI…FTQLQMIDGK (157 aa). 269 to 276 is an ATP binding site; the sequence is DEMGLGKT. A DESH box motif is present at residues 361–364; that stretch reads DESH. The Helicase C-terminal domain occupies 527-681; sequence YLKTLVKEQK…NLQKATHTAA (155 aa).

The protein belongs to the SNF2/RAD54 helicase family. SMARCAL1 subfamily.

Its subcellular location is the nucleus. Functionally, ATP-dependent annealing helicase that catalyzes the rewinding of the stably unwound DNA. The polypeptide is SWI/SNF-related matrix-associated actin-dependent regulator of chromatin subfamily A-like protein 1 (Marcal1) (Drosophila melanogaster (Fruit fly)).